Consider the following 357-residue polypeptide: Protein RecA (357 aa).

ATP is bound at residue 67–74 (GPESSGKT).

It belongs to the RecA family.

Its subcellular location is the cytoplasm. Its function is as follows. Can catalyze the hydrolysis of ATP in the presence of single-stranded DNA, the ATP-dependent uptake of single-stranded DNA by duplex DNA, and the ATP-dependent hybridization of homologous single-stranded DNAs. It interacts with LexA causing its activation and leading to its autocatalytic cleavage. This is Protein RecA from Shewanella oneidensis (strain ATCC 700550 / JCM 31522 / CIP 106686 / LMG 19005 / NCIMB 14063 / MR-1).